The sequence spans 302 residues: Beta-casein (302 aa).

The N-terminal stretch at 1–15 is a signal peptide; the sequence is MKLLILTCLVALGFA. Ser23 and Ser25 each carry phosphoserine. A run of 16 repeats spans residues 144–151, 152–159, 160–167, 168–175, 176–182, 183–190, 191–198, 199–204, 205–214, 215–222, 223–230, 231–238, 241–247, 248–255, 256–262, and 263–269. The interval 144–269 is 16 X approximate tandem repeats; that stretch reads KREMLPIYER…LLPEEILPVN (126 aa).

Belongs to the beta-casein family. As to expression, mammary gland specific. Secreted in milk.

It localises to the secreted. Important role in determination of the surface properties of the casein micelles. This Notamacropus eugenii (Tammar wallaby) protein is Beta-casein (CSN2).